Here is a 201-residue protein sequence, read N- to C-terminus: MEITTIDTKSKLKLNKEIFAYTYNEGLVHQAVVTFMNNARSGNSAQKTRSEVSGGGKKPWNQKGTGRARAGTIRSPLWRSGGVTFASKKRDYSQKLNKKMYKRALRSIISELCRTGNLMVVSDFQCDNHKTKDFLKKMNQMEISNALIIMSEVGENEYLGSRNLIDYDICDVTTIDPVSLLRFEKVVVTEAAIKKIEEQLQ.

The segment at 42–67 (GNSAQKTRSEVSGGGKKPWNQKGTGR) is disordered.

It belongs to the universal ribosomal protein uL4 family. Part of the 50S ribosomal subunit.

Its function is as follows. One of the primary rRNA binding proteins, this protein initially binds near the 5'-end of the 23S rRNA. It is important during the early stages of 50S assembly. It makes multiple contacts with different domains of the 23S rRNA in the assembled 50S subunit and ribosome. Forms part of the polypeptide exit tunnel. This is Large ribosomal subunit protein uL4 from Legionella pneumophila (strain Paris).